The chain runs to 266 residues: 3-methyl-2-oxobutanoate hydroxymethyltransferase (266 aa).

Aspartate 43 and aspartate 82 together coordinate Mg(2+). Residues 43–44 (DS), aspartate 82, and lysine 110 each bind 3-methyl-2-oxobutanoate. Residue glutamate 112 coordinates Mg(2+). Glutamate 179 functions as the Proton acceptor in the catalytic mechanism.

Belongs to the PanB family. As to quaternary structure, homodecamer; pentamer of dimers. The cofactor is Mg(2+).

It localises to the cytoplasm. It catalyses the reaction 3-methyl-2-oxobutanoate + (6R)-5,10-methylene-5,6,7,8-tetrahydrofolate + H2O = 2-dehydropantoate + (6S)-5,6,7,8-tetrahydrofolate. It participates in cofactor biosynthesis; (R)-pantothenate biosynthesis; (R)-pantoate from 3-methyl-2-oxobutanoate: step 1/2. Its function is as follows. Catalyzes the reversible reaction in which hydroxymethyl group from 5,10-methylenetetrahydrofolate is transferred onto alpha-ketoisovalerate to form ketopantoate. This Psychrobacter arcticus (strain DSM 17307 / VKM B-2377 / 273-4) protein is 3-methyl-2-oxobutanoate hydroxymethyltransferase.